A 546-amino-acid polypeptide reads, in one-letter code: Arginine--tRNA ligase (546 aa).

The 'HIGH' region signature appears at 122 to 132 (ANPTGPFTVGH).

The protein belongs to the class-I aminoacyl-tRNA synthetase family. In terms of assembly, monomer.

The protein resides in the cytoplasm. The enzyme catalyses tRNA(Arg) + L-arginine + ATP = L-arginyl-tRNA(Arg) + AMP + diphosphate. The protein is Arginine--tRNA ligase (argS) of Thermotoga maritima (strain ATCC 43589 / DSM 3109 / JCM 10099 / NBRC 100826 / MSB8).